We begin with the raw amino-acid sequence, 643 residues long: Threonine--tRNA ligase (643 aa).

Positions 1–65 (MIHITLPDGS…NKDMPLSIVT (65 aa)) constitute a TGS domain. The catalytic stretch occupies residues 246–537 (DHRKLGRELD…LIEQHAGAMP (292 aa)). Zn(2+) is bound by residues Cys337, His388, and His514.

This sequence belongs to the class-II aminoacyl-tRNA synthetase family. Homodimer. It depends on Zn(2+) as a cofactor.

It is found in the cytoplasm. The enzyme catalyses tRNA(Thr) + L-threonine + ATP = L-threonyl-tRNA(Thr) + AMP + diphosphate + H(+). Functionally, catalyzes the attachment of threonine to tRNA(Thr) in a two-step reaction: L-threonine is first activated by ATP to form Thr-AMP and then transferred to the acceptor end of tRNA(Thr). Also edits incorrectly charged L-seryl-tRNA(Thr). The polypeptide is Threonine--tRNA ligase (Delftia acidovorans (strain DSM 14801 / SPH-1)).